The sequence spans 249 residues: Oxidoreductase asL5 (249 aa).

Residues I21, K45, N90, Y155, K159, I188, and T190 each contribute to the NADP(+) site. Y155 acts as the Proton acceptor in catalysis. K159 acts as the Lowers pKa of active site Tyr in catalysis.

The protein belongs to the short-chain dehydrogenases/reductases (SDR) family.

Oxidoreductase; part of the gene cluster that mediates the biosynthesis of xenovulene A, an unusual meroterpenoid that has potent inhibitory effects on the human gamma-aminobutyrate A (GABAA) benzodiazepine receptor. The first step of xenovulene A biosynthesis is the biosynthesis of 3-methylorcinaldehyde performed by the non-reducing polyketide synthase aspks1. The salicylate hydroxylase asL1 then catalyzes the oxidative dearomatization of 3-methylorcinaldehyde to yield a dearomatized hydroxycyclohexadione. The 2-oxoglutarate-dependent dioxygenase asL3 further catalyzes the oxidative ring expansion to provide the first tropolone metabolite. The cytochrome P450 monooxygenase asR2 allows the synthesis of tropolone hemiacetal. In parallel, a previously unrecognised class of terpene cyclase, asR6, produces alpha-humulene from farnesylpyrophosphate (FPP). The putative Diels-Alderase asR5 probably catalyzes the formation of the tropolone-humulene skeleton by linking humulene and the polyketide moiety. Oxidative-ring contractions catalyzed by asL4 and asL6 then processively remove carbon atoms from the polyketide to yield xenovulene A. This chain is Oxidoreductase asL5, found in Sarocladium schorii (Acremonium strictum (strain IMI 501407)).